A 308-amino-acid chain; its full sequence is MKPAFTAGELNTYTSPGDVTAVSRALRHTGRRVMLVPTMGALHDGHLALVRAAKRVPGSVVVVSIFVNPLQFSAGEDLDAYPRTLDDDLALLRSEGVEIAFTPTAAAMYPNGLRTTVQPGPLAAELEGGPRPTHFAGVLTVVCKLLQIVRPDRIFFGEKDYQQLVMIRQMVADLNIDVQVVGVPTVREADGLAMSSRNRYLDATQRELAVTLSAALTAGAHAAHLGGAAALRAARAVLDAVPELTVDYLELRDAGLGPAPAHGSARLLVAARLGNTRLLDNIEMQIETPAGTAGPDGDRQYAQSPWRN.

Residue 39–46 (MGALHDGH) participates in ATP binding. His46 functions as the Proton donor in the catalytic mechanism. Gln71 contacts (R)-pantoate. Position 71 (Gln71) interacts with beta-alanine. 157-160 (GEKD) provides a ligand contact to ATP. Gln163 is a binding site for (R)-pantoate. ATP is bound by residues Val186 and 194-197 (MSSR). Residues 286–308 (IETPAGTAGPDGDRQYAQSPWRN) form a disordered region.

It belongs to the pantothenate synthetase family. Homodimer.

It localises to the cytoplasm. It catalyses the reaction (R)-pantoate + beta-alanine + ATP = (R)-pantothenate + AMP + diphosphate + H(+). The protein operates within cofactor biosynthesis; (R)-pantothenate biosynthesis; (R)-pantothenate from (R)-pantoate and beta-alanine: step 1/1. Catalyzes the condensation of pantoate with beta-alanine in an ATP-dependent reaction via a pantoyl-adenylate intermediate. The protein is Pantothenate synthetase of Mycobacterium avium (strain 104).